We begin with the raw amino-acid sequence, 76 residues long: Large ribosomal subunit protein bL31 (76 aa).

Zn(2+) is bound by residues cysteine 16, cysteine 18, cysteine 37, and cysteine 40.

This sequence belongs to the bacterial ribosomal protein bL31 family. Type A subfamily. As to quaternary structure, part of the 50S ribosomal subunit. Requires Zn(2+) as cofactor.

Functionally, binds the 23S rRNA. The sequence is that of Large ribosomal subunit protein bL31 from Solibacter usitatus (strain Ellin6076).